The sequence spans 355 residues: Zinc finger protein CONSTANS-LIKE 5 (355 aa).

Positions 22, 25, 45, 50, 61, 64, 84, and 89 each coordinate Zn(2+). The segment at 22–60 (CDACKSVTAAVFCRVDSAFLCIACDTRIHSFTRHERVWV) adopts a B box-type 1; atypical zinc-finger fold. The segment at 61–103 (CEVCEQAPAAVTCKADAAALCVSCDADIHSANPLASRHERVPV) adopts a B box-type 2; atypical zinc-finger fold. Positions 285 to 327 (REARVLRYREKRKNRKFEKTIRYASRKAYAESRPRIKGRFAKR) constitute a CCT domain.

The protein belongs to the CONSTANS family.

Its subcellular location is the nucleus. The sequence is that of Zinc finger protein CONSTANS-LIKE 5 (COL5) from Arabidopsis thaliana (Mouse-ear cress).